The following is a 597-amino-acid chain: Uptake hydrogenase large subunit (597 aa).

Residues Cys-75, Cys-78, Cys-576, and Cys-579 each coordinate Ni(2+).

The protein belongs to the [NiFe]/[NiFeSe] hydrogenase large subunit family. In terms of assembly, heterodimer of a large and a small subunit. Ni(2+) serves as cofactor.

It localises to the cell membrane. The catalysed reaction is H2 + A = AH2. In terms of biological role, this enzyme recycles the H(2) produced by nitrogenase to increase the production of ATP and to protect nitrogenase against inhibition or damage by O(2) under carbon- or phosphate-limited conditions. The sequence is that of Uptake hydrogenase large subunit (hupB) from Rhodobacter capsulatus (Rhodopseudomonas capsulata).